The sequence spans 196 residues: Probable malonic semialdehyde reductase RutE (196 aa).

Belongs to the nitroreductase family. HadB/RutE subfamily. FMN is required as a cofactor.

The catalysed reaction is 3-hydroxypropanoate + NADP(+) = 3-oxopropanoate + NADPH + H(+). Functionally, may reduce toxic product malonic semialdehyde to 3-hydroxypropionic acid, which is excreted. The chain is Probable malonic semialdehyde reductase RutE from Cronobacter sakazakii (strain ATCC BAA-894) (Enterobacter sakazakii).